Here is a 570-residue protein sequence, read N- to C-terminus: Nucleoprotein (570 aa).

Residues 54–241 (MRKEKRDDSD…IEPKKSAINI (188 aa)) form a binding site for the cap structure m7GTP region. Residues aspartate 390 and glutamate 392 each coordinate Mn(2+). Zn(2+) is bound by residues glutamate 400, cysteine 507, histidine 510, and cysteine 530. Residue aspartate 534 coordinates Mn(2+).

It belongs to the arenaviridae nucleocapsid protein family. Homomultimerizes to form the nucleocapsid. Binds to viral genomic RNA. Interacts with glycoprotein G2. Interacts with protein Z; this interaction probably directs the encapsidated genome to budding sites. Interacts with protein L; this interaction does not interfere with Z-L interaction. Interacts with host IKBKE (via Protein kinase domain); the interaction inhibits IKBKE kinase activity.

The protein localises to the virion. It is found in the host cytoplasm. Its function is as follows. Encapsidates the genome, protecting it from nucleases. The encapsidated genomic RNA is termed the nucleocapsid (NC). Serves as template for viral transcription and replication. The increased presence of protein N in host cell does not seem to trigger the switch from transcription to replication as observed in other negative strain RNA viruses. Through the interaction with host IKBKE, strongly inhibits the phosphorylation and nuclear translocation of host IRF3, a protein involved in interferon activation pathway, leading to the inhibition of interferon-beta and IRF3-dependent promoters activation. Also encodes a functional 3'-5' exoribonuclease that degrades preferentially dsRNA substrates and thereby participates in the suppression of interferon induction. This is Nucleoprotein from Mopeia virus (MOPV).